The following is a 284-amino-acid chain: Nucleotide-binding protein Shal_3708 (284 aa).

8–15 (GRSGSGKS) contacts ATP. Residue 56–59 (DIRN) coordinates GTP.

Belongs to the RapZ-like family.

Functionally, displays ATPase and GTPase activities. This chain is Nucleotide-binding protein Shal_3708, found in Shewanella halifaxensis (strain HAW-EB4).